The following is a 76-amino-acid chain: UPF0291 protein MW2494 (76 aa).

Belongs to the UPF0291 family.

Its subcellular location is the cytoplasm. The protein is UPF0291 protein MW2494 of Staphylococcus aureus (strain MW2).